Here is a 267-residue protein sequence, read N- to C-terminus: 3-methyl-2-oxobutanoate hydroxymethyltransferase (267 aa).

Mg(2+)-binding residues include Asp46 and Asp85. Residues 46-47 (DS), Asp85, and Lys115 each bind 3-methyl-2-oxobutanoate. Glu117 serves as a coordination point for Mg(2+). Glu184 acts as the Proton acceptor in catalysis.

This sequence belongs to the PanB family. As to quaternary structure, homodecamer; pentamer of dimers. It depends on Mg(2+) as a cofactor.

The protein localises to the cytoplasm. It catalyses the reaction 3-methyl-2-oxobutanoate + (6R)-5,10-methylene-5,6,7,8-tetrahydrofolate + H2O = 2-dehydropantoate + (6S)-5,6,7,8-tetrahydrofolate. Its pathway is cofactor biosynthesis; (R)-pantothenate biosynthesis; (R)-pantoate from 3-methyl-2-oxobutanoate: step 1/2. In terms of biological role, catalyzes the reversible reaction in which hydroxymethyl group from 5,10-methylenetetrahydrofolate is transferred onto alpha-ketoisovalerate to form ketopantoate. The chain is 3-methyl-2-oxobutanoate hydroxymethyltransferase from Syntrophotalea carbinolica (strain DSM 2380 / NBRC 103641 / GraBd1) (Pelobacter carbinolicus).